Consider the following 783-residue polypeptide: E3 UFM1-protein ligase 1 homolog (783 aa).

Positions 404–482 (SNSSANFDAD…AGSSRKSVKP (79 aa)) are disordered. The segment covering 445 to 457 (KSTKKHQRGRAAA) has biased composition (basic residues).

This sequence belongs to the UFL1 family.

In terms of biological role, E3 UFM1-protein ligase that mediates ufmylation of target proteins. The chain is E3 UFM1-protein ligase 1 homolog from Drosophila mojavensis (Fruit fly).